The primary structure comprises 205 residues: tRNA (guanine-N(7)-)-methyltransferase (205 aa).

The S-adenosyl-L-methionine site is built by glutamate 34, glutamate 59, aspartate 86, and aspartate 107. Aspartate 107 is an active-site residue. Lysine 111 lines the substrate pocket. The interval 113–118 is interaction with RNA; that stretch reads RHEKRR. Substrate-binding positions include aspartate 144 and 182–185; that span reads TGYE.

It belongs to the class I-like SAM-binding methyltransferase superfamily. TrmB family.

It catalyses the reaction guanosine(46) in tRNA + S-adenosyl-L-methionine = N(7)-methylguanosine(46) in tRNA + S-adenosyl-L-homocysteine. It participates in tRNA modification; N(7)-methylguanine-tRNA biosynthesis. Catalyzes the formation of N(7)-methylguanine at position 46 (m7G46) in tRNA. This Mycoplasmopsis synoviae (strain 53) (Mycoplasma synoviae) protein is tRNA (guanine-N(7)-)-methyltransferase.